A 181-amino-acid polypeptide reads, in one-letter code: UPF0302 protein LMHCC_0635 (181 aa).

It belongs to the UPF0302 family.

The chain is UPF0302 protein LMHCC_0635 from Listeria monocytogenes serotype 4a (strain HCC23).